We begin with the raw amino-acid sequence, 750 residues long: Photosystem I P700 chlorophyll a apoprotein A1 (750 aa).

8 helical membrane passes run 70 to 93 (IFSA…FHGA), 156 to 179 (LYCT…FHYH), 195 to 219 (LNHH…HVSL), 291 to 309 (IAHH…GHMY), 346 to 369 (WHAQ…HHMY), 385 to 411 (LSLF…IFMV), 433 to 455 (AIIS…LYIH), and 531 to 549 (FLVH…LILL). [4Fe-4S] cluster contacts are provided by C573 and C582. The next 2 helical transmembrane spans lie at 589-610 (HVFL…HFSW) and 664-686 (LSAY…MFLF). H675 contributes to the chlorophyll a' binding site. Positions 683 and 691 each coordinate chlorophyll a. Phylloquinone is bound at residue W692. Residues 724 to 744 (AVGVTHYLLGGIATTWAFFLA) form a helical membrane-spanning segment.

The protein belongs to the PsaA/PsaB family. The PsaA/B heterodimer binds the P700 chlorophyll special pair and subsequent electron acceptors. PSI consists of a core antenna complex that captures photons, and an electron transfer chain that converts photonic excitation into a charge separation. The eukaryotic PSI reaction center is composed of at least 11 subunits. It depends on P700 is a chlorophyll a/chlorophyll a' dimer, A0 is one or more chlorophyll a, A1 is one or both phylloquinones and FX is a shared 4Fe-4S iron-sulfur center. as a cofactor.

The protein resides in the plastid. It is found in the chloroplast thylakoid membrane. It carries out the reaction reduced [plastocyanin] + hnu + oxidized [2Fe-2S]-[ferredoxin] = oxidized [plastocyanin] + reduced [2Fe-2S]-[ferredoxin]. Its function is as follows. PsaA and PsaB bind P700, the primary electron donor of photosystem I (PSI), as well as the electron acceptors A0, A1 and FX. PSI is a plastocyanin-ferredoxin oxidoreductase, converting photonic excitation into a charge separation, which transfers an electron from the donor P700 chlorophyll pair to the spectroscopically characterized acceptors A0, A1, FX, FA and FB in turn. Oxidized P700 is reduced on the lumenal side of the thylakoid membrane by plastocyanin. In Nandina domestica (Heavenly bamboo), this protein is Photosystem I P700 chlorophyll a apoprotein A1.